The primary structure comprises 341 residues: MSTNIAINGMGRIGRMVLRIALQNKNLNVVAINASYPPETIAHLINYDTTHGKYNLKVEPIENGLQVGDHKIKLVADRNPENLPWKELDIDIAIDATGKFNHGDKAIAHIKAGAKKVLLTGPSKGGHVQMVVKGVNDNQLDIEAFDIFSNASCTTNCIGPVAKVLNNQFGIVNGLMTTVHAITNDQKNIDNPHKDLRRARSCNESIIPTSTGAAKALKEVLPELEGKLHGMALRVPTKNVSLVDLVVDLEKEVTAEEVNQAFENAGLEGIIEVEHQPLVSVDFNTNPNSAIIDAKSTMVMSGNKVKVIAWYDNEWGYSNRVVDVAEQIGALLTSKETVSAS.

Residues 12 to 13 (RI), arginine 78, and threonine 120 each bind NAD(+). D-glyceraldehyde 3-phosphate contacts are provided by residues 152 to 154 (SCT) and threonine 183. Residue cysteine 153 is the Nucleophile of the active site. Residue asparagine 184 participates in NAD(+) binding. D-glyceraldehyde 3-phosphate contacts are provided by residues arginine 198, 211 to 212 (TG), and arginine 234. Asparagine 313 provides a ligand contact to NAD(+).

This sequence belongs to the glyceraldehyde-3-phosphate dehydrogenase family. In terms of assembly, homotetramer.

It localises to the cytoplasm. It carries out the reaction D-glyceraldehyde 3-phosphate + phosphate + NAD(+) = (2R)-3-phospho-glyceroyl phosphate + NADH + H(+). Its pathway is carbohydrate degradation; glycolysis; pyruvate from D-glyceraldehyde 3-phosphate: step 1/5. Functionally, catalyzes the oxidative phosphorylation of glyceraldehyde 3-phosphate (G3P) to 1,3-bisphosphoglycerate (BPG) using the cofactor NAD. The first reaction step involves the formation of a hemiacetal intermediate between G3P and a cysteine residue, and this hemiacetal intermediate is then oxidized to a thioester, with concomitant reduction of NAD to NADH. The reduced NADH is then exchanged with the second NAD, and the thioester is attacked by a nucleophilic inorganic phosphate to produce BPG. This Staphylococcus aureus (strain COL) protein is Glyceraldehyde-3-phosphate dehydrogenase 2 (gapA2).